The sequence spans 513 residues: Anthranilate synthase component 1 (513 aa).

L-tryptophan is bound by residues serine 50 and 279-281 (PYM). 314–315 (GT) provides a ligand contact to chorismate. Mg(2+) is bound at residue glutamate 341. Residues tyrosine 429, arginine 449, 463 to 465 (GAG), and glycine 465 contribute to the chorismate site. A Mg(2+)-binding site is contributed by glutamate 478.

This sequence belongs to the anthranilate synthase component I family. As to quaternary structure, heterotetramer consisting of two non-identical subunits: a beta subunit (TrpG) and a large alpha subunit (TrpE). The cofactor is Mg(2+).

It catalyses the reaction chorismate + L-glutamine = anthranilate + pyruvate + L-glutamate + H(+). The protein operates within amino-acid biosynthesis; L-tryptophan biosynthesis; L-tryptophan from chorismate: step 1/5. With respect to regulation, feedback inhibited by tryptophan. Part of a heterotetrameric complex that catalyzes the two-step biosynthesis of anthranilate, an intermediate in the biosynthesis of L-tryptophan. In the first step, the glutamine-binding beta subunit (TrpG) of anthranilate synthase (AS) provides the glutamine amidotransferase activity which generates ammonia as a substrate that, along with chorismate, is used in the second step, catalyzed by the large alpha subunit of AS (TrpE) to produce anthranilate. In the absence of TrpG, TrpE can synthesize anthranilate directly from chorismate and high concentrations of ammonia. The polypeptide is Anthranilate synthase component 1 (trpE) (Bacillus pumilus (Bacillus mesentericus)).